The primary structure comprises 310 residues: tRNA pseudouridine synthase B (310 aa).

Residue D38 is the Nucleophile of the active site.

The protein belongs to the pseudouridine synthase TruB family. Type 1 subfamily.

It catalyses the reaction uridine(55) in tRNA = pseudouridine(55) in tRNA. Functionally, responsible for synthesis of pseudouridine from uracil-55 in the psi GC loop of transfer RNAs. The polypeptide is tRNA pseudouridine synthase B (Geotalea uraniireducens (strain Rf4) (Geobacter uraniireducens)).